Here is a 482-residue protein sequence, read N- to C-terminus: ATP synthase subunit beta (482 aa).

Residue 162-169 (GGAGVGKT) participates in ATP binding.

The protein belongs to the ATPase alpha/beta chains family. F-type ATPases have 2 components, CF(1) - the catalytic core - and CF(0) - the membrane proton channel. CF(1) has five subunits: alpha(3), beta(3), gamma(1), delta(1), epsilon(1). CF(0) has four main subunits: a(1), b(1), b'(1) and c(9-12).

The protein resides in the cellular thylakoid membrane. The enzyme catalyses ATP + H2O + 4 H(+)(in) = ADP + phosphate + 5 H(+)(out). Functionally, produces ATP from ADP in the presence of a proton gradient across the membrane. The catalytic sites are hosted primarily by the beta subunits. The polypeptide is ATP synthase subunit beta (Nostoc punctiforme (strain ATCC 29133 / PCC 73102)).